The following is a 606-amino-acid chain: MANPKEKTPMCLVNELARFNRIQPQYKLLNEKGPAHAKIFTVQLCLGNQVWESEGSSIKKAQHSTATKALAESSLPRPPPRSPKADSNSNPGSITPTVELNGLAMKRGEPAIYRPLDPKPIPNYRANYNFRGMFNQRYHYPVPKVFYVQLTVGNNEFIGEGRTRQAARHNAAMKALQALKNEPIPERPPQCSEEKKETEENSDASKSEISLVYEIALKRNLPVNFEVLKESGPPHMKSFLTRVTVGEFSAEGEGNSKKLSKKRAALSILQELKKLPVLPVVEKPKVHYKKRPKTILKTGPEYGQGMNPISRLAQIQQAKKEKEPEYMLLSERGMPRRREFIMQVKVGTEVTTGTGPNKKVAKRNAAEAMLLQLGYKASTPLQNTPEKMDNKGWNGQRAAFPETTSNTQKGILHLSPDVYQEMEASRNKGVPGAPGNFPTAKEIGQGSAGPFCTPSVGNTATIAKELLLSGTSPTAEALVLKGKAPALACGSIQPSQQLEYLAHIQGFQVQYSDRQTDKEFMTYLTLSPVQMTFHGIGSSIPASHDQAALSALKQLSEQGLDPVDGPIKVENGSCDIQAKRLAERTESKPTNSGTTAQDCKDSKAVV.

DRBM domains are found at residues 8–75 and 95–181; these read TPMC…ESSL and TPTV…ALKN. 2 disordered regions span residues 57 to 97 and 177 to 205; these read SIKK…ITPT and QALK…SDAS. Over residues 85-97 the composition is skewed to polar residues; the sequence is ADSNSNPGSITPT. A compositionally biased stretch (basic and acidic residues) spans 192–205; sequence SEEKKETEENSDAS. 3 consecutive DRBM domains span residues 207 to 274, 307 to 375, and 493 to 557; these read SEIS…ELKK, NPIS…QLGY, and QPSQ…QLSE. The segment at 580 to 606 is disordered; that stretch reads RLAERTESKPTNSGTTAQDCKDSKAVV. Residues 588 to 597 show a composition bias toward polar residues; the sequence is KPTNSGTTAQ.

In terms of biological role, RNA-binding protein required for the microtubule-dependent transport of RNAs within polarized cell types. In Danio rerio (Zebrafish), this protein is Double-stranded RNA-binding protein Staufen homolog 2 (stau2).